Here is a 512-residue protein sequence, read N- to C-terminus: Cytochrome P450 monooxygenase poxM (512 aa).

A helical transmembrane segment spans residues 15-35; the sequence is LLKGATIALSFFSLYLFGLVI. Cys-449 contacts heme.

It belongs to the cytochrome P450 family. Heme is required as a cofactor.

It is found in the membrane. It functions in the pathway secondary metabolite biosynthesis. Its function is as follows. Cytochrome P450 monooxygenase; part of the gene cluster that mediates the biosynthesis of oxaleimides, cytotoxic compounds containing an unusual disubstituted succinimide moiety. The first step of the pathway is provided by the HR-PKS poxF that serves in a new mode of collaborative biosynthesis with the PKS-NRPS poxE, by providing the olefin containing amino acid substrate via the synthesis of an ACP-bound dec-4-enoate. The cytochrome P450 monooxygenase poxM-catalyzed oxidation at the alpha-position creates the enzyme-bound 2-hydroxydec-4-enoyl-ACP thioester, which may be prone to spontaneous hydrolysis to yield 2-hydroxydec-4-enoic acid due to increased electrophilicity of the carbonyl. 2-hydroxydec-4-enoic acid can then be further oxidized by poxM to yield the alpha-ketoacid 2-oxodec-4-enoicacid, which is reductively aminated by the aminotransferase poxL to yield (S,E)-2-aminodec-4-enoic acid. The Hybrid PKS-NRPS synthetase poxE then performs condensation between the octaketide product of its PKS modules and the amino group of (S,E)-2-aminodec-4-enoic acid which is activated and incorporated by the adenylation domain. The resulting aminoacyl product can be cyclized by the Diels-Alderase PoxQ and reductively released by the reductive (R) domain of poxE to yield an aldehyde intermediate. The released aldehyde is then substrate for a Knoevenagel condensation by the hydrolyase poxO followed by an oxidation at the 5-position of the pyrrolidone ring. The presence of the olefin from the amino acid building block allows for migration of the substituted allyl group to occur. This allylic transposition reaction takes place in a conjugate addition, semipinacol-like fashion to yield a succinimide intermediate. Iterative two-electron oxidations of the C7 methyl of the succinimide intermediate to the carboxylic acid can be catalyzed by one of two remaining cytochrome P450 monooxygenasess poxC or poxD to yield oxaleimide A. Subsequent oxidation yields the maleimide scaffold oxaleimide I. Both oxaleimide A and oxaleimide I can undergo oxidative modifications in the decalin ring to yield the series of products oxaleimides B to H. This Penicillium oxalicum (strain 114-2 / CGMCC 5302) (Penicillium decumbens) protein is Cytochrome P450 monooxygenase poxM.